The sequence spans 233 residues: Zein-alpha PMS2 (233 aa).

The first 21 residues, 1-21 (MAAKIFCFLMLLGLSASVATA), serve as a signal peptide directing secretion.

It belongs to the zein family.

Zeins are major seed storage proteins. The polypeptide is Zein-alpha PMS2 (ZMPMS2) (Zea mays (Maize)).